Reading from the N-terminus, the 331-residue chain is Ketol-acid reductoisomerase (NADP(+)) (331 aa).

One can recognise a KARI N-terminal Rossmann domain in the interval 2–182 (AKMYYDSDCN…GAGRAGILET (181 aa)). Residues 25–28 (YGSQ), Ser-51, and 83–86 (DEKQ) each bind NADP(+). His-108 is an active-site residue. NADP(+) is bound at residue Gly-134. Residues 183-329 (TFREETETDL…AELRKMMSWL (147 aa)) enclose the KARI C-terminal knotted domain. Residues Asp-191, Glu-195, Glu-227, and Glu-231 each contribute to the Mg(2+) site. Ser-252 contacts substrate.

Belongs to the ketol-acid reductoisomerase family. Mg(2+) serves as cofactor.

It carries out the reaction (2R)-2,3-dihydroxy-3-methylbutanoate + NADP(+) = (2S)-2-acetolactate + NADPH + H(+). It catalyses the reaction (2R,3R)-2,3-dihydroxy-3-methylpentanoate + NADP(+) = (S)-2-ethyl-2-hydroxy-3-oxobutanoate + NADPH + H(+). It participates in amino-acid biosynthesis; L-isoleucine biosynthesis; L-isoleucine from 2-oxobutanoate: step 2/4. Its pathway is amino-acid biosynthesis; L-valine biosynthesis; L-valine from pyruvate: step 2/4. Its function is as follows. Involved in the biosynthesis of branched-chain amino acids (BCAA). Catalyzes an alkyl-migration followed by a ketol-acid reduction of (S)-2-acetolactate (S2AL) to yield (R)-2,3-dihydroxy-isovalerate. In the isomerase reaction, S2AL is rearranged via a Mg-dependent methyl migration to produce 3-hydroxy-3-methyl-2-ketobutyrate (HMKB). In the reductase reaction, this 2-ketoacid undergoes a metal-dependent reduction by NADPH to yield (R)-2,3-dihydroxy-isovalerate. The protein is Ketol-acid reductoisomerase (NADP(+)) of Ruminiclostridium cellulolyticum (strain ATCC 35319 / DSM 5812 / JCM 6584 / H10) (Clostridium cellulolyticum).